The sequence spans 451 residues: MVEVTRPPTKAWATLSPWLPSRGPDADYWWRLTGQHLSNMVEAAGYSTDQQYVALLFHYHWIVPYMGPAPGPDGNLKWKSLLGVEGSPIEYSWKWNTAAGKPDVRYTTEAIGSFTGTLLDPLNQQATLEMLHRIADFVPTVDLTWTNHFFATLYDHDRSKYAKEAAAGAHFTTTVVVAAEWLKNGLNLKTYFVPRRLGQSDGKLPIALWEESLKQLDPNSESRAAMHEFLNNDPEGKLLSPFMLAVDNVVPEKSRLKFYFQSPHTSFASVRQVMTMGGRIPVPESQLQELRSLIAAVTGLDSDFPEDSEVPCISEYNPAAKDNFVEIDLLLSGYLYYFDIAPGATVPDIKFYTPVRRYGPDDGALAKGIADWMTSRGRGEYSQRYLDMLADLTEHRKLEDGKGMQTYVSCLFKKSHLDVTSYIGPEAFDPARFLKHKAHTTRSTRRRSDSH.

Positions 105, 189, 191, 257, 259, and 422 each coordinate dimethylallyl diphosphate.

The protein belongs to the tryptophan dimethylallyltransferase family.

The catalysed reaction is (8S)-annullatin E + dimethylallyl diphosphate = (8S)-annullatin J + diphosphate. It functions in the pathway secondary metabolite biosynthesis. Functionally, cytochrome P450 monooxygenase; part of the gene cluster that mediates the biosynthesis of annullatin D, an alkylated aromatic polyketide with a fused dihydrobenzofuran lactone ring system that exhibits potent agonistic activities toward the cannabinoid receptors. Within the pathway, anuH uses dimethylallyl diphosphate (DMAPP) to prenylate (8S)-annullatin E to produce (8S)-annullatin J. Geranyl and farnesyl diphosphate are not consumed by anuH for prenylation. 2-hydroxymethyl-3-pentylphenol, without the hydroxyl group at the side chain, is also accepted by anuH, but only with low conversion yield. The annullatin backbone 2-hydroxymethyl-3-pentylphenol is assembled from one acetyl-CoA starter unit and 5 malonyl-CoA elongation units by cooperation of the highly reducing polyketide synthase anuA, the short-chain dehydrogenase anuB and the oxidoreductase anuC, before being hydroxylated at the C-5 alkyl chain by the cytochrome P450 monooxygenase anuE to form (8S)-annullatin E. The prenyltransferase anuH subsequently installs one isoprenyl group at the benzene ring to form (8S)-annullatin J. Enzymatic or nonenzymatic dihydro-benzofuran ring formation between the prenyl and the phenolic hydroxyl groups in (8S)-annullatin J results in two diastereomers (2S,9S)-annullatin H and compound 12. The intermediate (2S,9S)-annullatin H is then converted to (2S,9S)-annullatin D by the FAD-linked oxidoreductase anuG-catalyzed five-member lactone ring formation. The isomer 12 acts as a substrate for the short-chain dehydrogenase anuF and is oxidized to (2R)-annullatin F, which is subsequently acetylated by an acetyltransferase leading to (2R)-annullatin G formation. The remaining enzymes identified within the cluster, anuD, anuI and anuJ, seem not to be involved in annullatin biosynthesis. The chain is Prenyltransferase anuH from Penicillium roqueforti (strain FM164).